The sequence spans 466 residues: Sulfate adenylyltransferase subunit 1 (466 aa).

In terms of domain architecture, tr-type G spans 22–237 (KELVRFLTCG…LNTIDVKTQE (216 aa)). Residues 31-38 (GSVDDGKS) form a G1 region. 31 to 38 (GSVDDGKS) serves as a coordination point for GTP. The segment at 89 to 93 (GITID) is G2. The tract at residues 110 to 113 (DTPG) is G3. GTP is bound by residues 110–114 (DTPGH) and 165–168 (NKMD). The interval 165 to 168 (NKMD) is G4. Residues 202-204 (SAL) form a G5 region.

It belongs to the TRAFAC class translation factor GTPase superfamily. Classic translation factor GTPase family. CysN/NodQ subfamily. As to quaternary structure, heterodimer composed of CysD, the smaller subunit, and CysN.

The catalysed reaction is sulfate + ATP + H(+) = adenosine 5'-phosphosulfate + diphosphate. It participates in sulfur metabolism; hydrogen sulfide biosynthesis; sulfite from sulfate: step 1/3. In terms of biological role, with CysD forms the ATP sulfurylase (ATPS) that catalyzes the adenylation of sulfate producing adenosine 5'-phosphosulfate (APS) and diphosphate, the first enzymatic step in sulfur assimilation pathway. APS synthesis involves the formation of a high-energy phosphoric-sulfuric acid anhydride bond driven by GTP hydrolysis by CysN coupled to ATP hydrolysis by CysD. This is Sulfate adenylyltransferase subunit 1 from Colwellia psychrerythraea (strain 34H / ATCC BAA-681) (Vibrio psychroerythus).